Consider the following 948-residue polypeptide: 3-hydroxy-3-methylglutaryl-coenzyme A reductase (948 aa).

Helical transmembrane passes span 9–25 (LLFF…VLLI), 55–71 (VIIF…VLTC), 96–112 (LILF…VLFV), 124–140 (TSVF…FIVL), 207–223 (IIYI…FMRI), and 286–302 (CWST…ILHL). Asn316 carries an N-linked (GlcNAc...) asparagine glycan. The helical transmembrane segment at 347-363 (VINANLVVYLFLGLFLF) threads the bilayer. A linker region spans residues 364-466 (KRIRLNKPIN…MLTEKIKQGL (103 aa)). N-linked (GlcNAc...) asparagine glycosylation occurs at Asn430. The interval 467-948 (GHELSDTEIL…VNPEISHYTM (482 aa)) is catalytic. Catalysis depends on charge relay system residues Glu567, Lys699, and Asp777. His869 (proton donor) is an active-site residue. Asn895 is a glycosylation site (N-linked (GlcNAc...) asparagine).

Belongs to the HMG-CoA reductase family.

Its subcellular location is the endoplasmic reticulum membrane. It is found in the peroxisome membrane. The catalysed reaction is (R)-mevalonate + 2 NADP(+) + CoA = (3S)-3-hydroxy-3-methylglutaryl-CoA + 2 NADPH + 2 H(+). It participates in metabolic intermediate biosynthesis; (R)-mevalonate biosynthesis; (R)-mevalonate from acetyl-CoA: step 3/3. This transmembrane glycoprotein is involved in the control of cholesterol and nonsterol isoprenoid compounds biosynthesis. It is the rate-limiting enzyme of sterol biosynthesis. This is 3-hydroxy-3-methylglutaryl-coenzyme A reductase from Schistosoma mansoni (Blood fluke).